Reading from the N-terminus, the 232-residue chain is Ribose-5-phosphate isomerase A (232 aa).

Residues 28-31, 83-86, and 96-99 each bind substrate; these read TGST, DGAD, and KGGG. Glu105 serves as the catalytic Proton acceptor. Lys123 contributes to the substrate binding site.

The protein belongs to the ribose 5-phosphate isomerase family. Homodimer.

It catalyses the reaction aldehydo-D-ribose 5-phosphate = D-ribulose 5-phosphate. It functions in the pathway carbohydrate degradation; pentose phosphate pathway; D-ribose 5-phosphate from D-ribulose 5-phosphate (non-oxidative stage): step 1/1. In terms of biological role, catalyzes the reversible conversion of ribose-5-phosphate to ribulose 5-phosphate. The polypeptide is Ribose-5-phosphate isomerase A (Rhodopseudomonas palustris (strain BisB18)).